Here is a 134-residue protein sequence, read N- to C-terminus: Translation initiation factor 2 subunit beta (134 aa).

Belongs to the eIF-2-beta/eIF-5 family. In terms of assembly, heterotrimer composed of an alpha, a beta and a gamma chain.

EIF-2 functions in the early steps of protein synthesis by forming a ternary complex with GTP and initiator tRNA. In Pyrobaculum arsenaticum (strain DSM 13514 / JCM 11321 / PZ6), this protein is Translation initiation factor 2 subunit beta.